The following is a 475-amino-acid chain: Gustatory and pheromone receptor 33a (475 aa).

Residues 1 to 34 lie on the Cytoplasmic side of the membrane; the sequence is MIQIMNWFSMVIGLIPLNRQQSETNFILDYAMMC. Residues 35 to 55 form a helical membrane-spanning segment; it reads IVPIFYVACYLLINLSHIIGL. At 56 to 68 the chain is on the extracellular side; sequence CLLDSCNSVCKLS. The helical transmembrane segment at 69-89 threads the bilayer; the sequence is SHLFMHLGAFLYLTITLLSLY. Residues 90 to 128 are Cytoplasmic-facing; the sequence is RRKEFFQQFDARLNDIDAVIQKCQRVAEMDKVKVTAVKH. The chain crosses the membrane as a helical span at residues 129-149; sequence SVAYHFTWLFLFCVFTFALYY. The Extracellular segment spans residues 150 to 158; that stretch reads DVRSLYLTF. A helical membrane pass occupies residues 159–179; sequence GNLAFIPFMVSSFPYLAGSII. The Cytoplasmic segment spans residues 180–319; the sequence is QGEFIYHVSV…LALSVITNGE (140 aa). The disordered stretch occupies residues 243-281; it reads TGFGNENKFAGEMKRQEGQQKNDDDDLDTSNDEDEDDFD. Positions 251–264 are enriched in basic and acidic residues; that stretch reads FAGEMKRQEGQQKN. The segment covering 265–281 has biased composition (acidic residues); that stretch reads DDDDLDTSNDEDEDDFD. Residues 320–340 traverse the membrane as a helical segment; it reads FGPQCVPYMAACFVVSIFGIF. At 341–357 the chain is on the extracellular side; that stretch reads LETKVNFIVGGKSRLLD. A helical membrane pass occupies residues 358–378; that stretch reads YMTYLYVIWSFTTMMVAYIVL. Topologically, residues 379 to 441 are cytoplasmic; that stretch reads RLCCNANNHS…FNGVGLFALD (63 aa). A helical transmembrane segment spans residues 442–462; the sequence is YTFIFSTVSAATSYLIVLLQF. The Extracellular segment spans residues 463 to 475; that stretch reads DMTAILRNEGLMS.

The protein belongs to the insect chemoreceptor superfamily. Gustatory receptor (GR) family. Gr66a subfamily. Expressed widely in gustatory receptor neurons (GRNs) that respond to aversive chemicals. In larvae, is expressed in neurons of the terminal external chemosensory organ, and the dorsal, ventral and posterior external chemosensory organs.

The protein localises to the cell membrane. In terms of biological role, gustatory receptor which mediates acceptance or avoidance behavior, depending on its substrates. Required for sensing all nonvolatile repulsive chemicals, including tastants, pheromones, and especially N,N-Diethyl-meta-toluamide (DEET), the most widely used insect repellent worldwide. Also functions as a pheromone receptor for a male inhibitory pheromone leading to male-male courtship suppression. The sequence is that of Gustatory and pheromone receptor 33a (Gr33a) from Drosophila melanogaster (Fruit fly).